Here is a 700-residue protein sequence, read N- to C-terminus: Probable pre-mRNA-splicing factor ATP-dependent RNA helicase DEAH4 (700 aa).

N-acetylalanine is present on Ala-2. In terms of domain architecture, Helicase ATP-binding spans 14-178 (VETVEKNSVV…FSGCPVLNVP (165 aa)). 27–34 (GETGSGKS) contributes to the ATP binding site. The DEAH box signature appears at 124-127 (DEAH). The region spanning 200-377 (SLKVAIDIHV…GSVLYLKSLD (178 aa)) is the Helicase C-terminal domain. Disordered stretches follow at residues 463-486 (PARSKPSEKKRKHDEDSNLPNGSG) and 654-682 (GPAPSFKVPEEKTELSKNNAETPAVSENV).

This sequence belongs to the DEAD box helicase family. DEAH subfamily. PRP22 sub-subfamily.

The enzyme catalyses ATP + H2O = ADP + phosphate + H(+). Functionally, may be involved in pre-mRNA splicing. This is Probable pre-mRNA-splicing factor ATP-dependent RNA helicase DEAH4 from Arabidopsis thaliana (Mouse-ear cress).